A 151-amino-acid polypeptide reads, in one-letter code: Probable cGMP 3',5'-cyclic phosphodiesterase subunit delta (151 aa).

This sequence belongs to the PDE6D/unc-119 family. In terms of assembly, interacts with Pde6.

Its subcellular location is the nucleus. The protein resides in the cytoplasm. This Drosophila simulans (Fruit fly) protein is Probable cGMP 3',5'-cyclic phosphodiesterase subunit delta.